A 306-amino-acid chain; its full sequence is Ribonuclease Z (306 aa).

Residues histidine 63, histidine 65, aspartate 67, histidine 68, histidine 140, aspartate 211, and histidine 269 each coordinate Zn(2+). The active-site Proton acceptor is the aspartate 67.

The protein belongs to the RNase Z family. Homodimer. It depends on Zn(2+) as a cofactor.

The enzyme catalyses Endonucleolytic cleavage of RNA, removing extra 3' nucleotides from tRNA precursor, generating 3' termini of tRNAs. A 3'-hydroxy group is left at the tRNA terminus and a 5'-phosphoryl group is left at the trailer molecule.. Zinc phosphodiesterase, which displays some tRNA 3'-processing endonuclease activity. Probably involved in tRNA maturation, by removing a 3'-trailer from precursor tRNA. In Listeria welshimeri serovar 6b (strain ATCC 35897 / DSM 20650 / CCUG 15529 / CIP 8149 / NCTC 11857 / SLCC 5334 / V8), this protein is Ribonuclease Z.